A 599-amino-acid polypeptide reads, in one-letter code: Aspartate--tRNA(Asp/Asn) ligase (599 aa).

L-aspartate is bound at residue Glu174. Positions 198–201 are aspartate; the sequence is QLFK. Arg220 lines the L-aspartate pocket. ATP is bound by residues 220 to 222 and Gln229; that span reads RDE. His457 contributes to the L-aspartate binding site. Glu491 lines the ATP pocket. Arg498 contacts L-aspartate. Residue 543–546 coordinates ATP; that stretch reads GLDR.

Belongs to the class-II aminoacyl-tRNA synthetase family. Type 1 subfamily. In terms of assembly, homodimer.

The protein resides in the cytoplasm. It carries out the reaction tRNA(Asx) + L-aspartate + ATP = L-aspartyl-tRNA(Asx) + AMP + diphosphate. In terms of biological role, aspartyl-tRNA synthetase with relaxed tRNA specificity since it is able to aspartylate not only its cognate tRNA(Asp) but also tRNA(Asn). Reaction proceeds in two steps: L-aspartate is first activated by ATP to form Asp-AMP and then transferred to the acceptor end of tRNA(Asp/Asn). The sequence is that of Aspartate--tRNA(Asp/Asn) ligase from Paraburkholderia xenovorans (strain LB400).